Reading from the N-terminus, the 909-residue chain is Tubulin polyglutamylase TTLL7 (909 aa).

The TTL domain maps to 40 to 392 (NGAITANVVG…RASDKKKNLA (353 aa)). Residues Lys162, 168–169 (MG), 190–193 (QEYL), and 203–205 (KFD) contribute to the ATP site. Arg229 serves as a coordination point for L-glutamate. 251-252 (TN) contacts ATP. L-glutamate-binding residues include Tyr253, Ser254, and Lys273. Mg(2+) contacts are provided by Asp338, Glu351, and Asn353. An L-glutamate-binding site is contributed by Lys369. Positions 390–452 (NLAKQKAEAQ…ISREEYENRH (63 aa)) are c-MTBD region. Disordered stretches follow at residues 517 to 580 (DEKL…KVSY) and 603 to 688 (KAAR…PSIS). A compositionally biased stretch (basic and acidic residues) spans 518–531 (EKLSGKPTRPKEPR). Residues 532–542 (TLSSMPESTQT) show a composition bias toward polar residues. A compositionally biased stretch (low complexity) spans 548 to 562 (NYSSHSSSNSTGSSS). The span at 571–580 (KEGKEKKVSY) shows a compositional bias: basic and acidic residues. Residues 604-625 (AARPFSNSSSPSSAASMRRSVS) show a composition bias toward low complexity. Positions 626–657 (CPRSITALNTQSPTTDQRPFSSRISSTITRPL) are enriched in polar residues. Residues 658–673 (SGNRTNSLNRSSSSNR) show a composition bias toward low complexity. A compositionally biased stretch (polar residues) spans 674-688 (VPQSGTSGSVYPSIS).

Belongs to the tubulin--tyrosine ligase family. As to quaternary structure, interacts with both alpha- and beta-tubulin (via C-terminal tubulin tails). Mg(2+) serves as cofactor.

The protein resides in the cell projection. Its subcellular location is the cilium. It localises to the cytoplasm. It is found in the cytoskeleton. The protein localises to the cilium basal body. The protein resides in the dendrite. Its subcellular location is the perikaryon. The catalysed reaction is L-glutamyl-[protein] + L-glutamate + ATP = gamma-L-glutamyl-L-glutamyl-[protein] + ADP + phosphate + H(+). It catalyses the reaction (L-glutamyl)(n)-gamma-L-glutamyl-L-glutamyl-[protein] + L-glutamate + ATP = (L-glutamyl)(n+1)-gamma-L-glutamyl-L-glutamyl-[protein] + ADP + phosphate + H(+). Its function is as follows. Polyglutamylase which modifies tubulin, generating polyglutamate side chains of variable lengths on the gamma-carboxyl group of specific glutamate residues within the C-terminal tail of tubulin. Mediates both ATP-dependent initiation and elongation steps of the polyglutamylation reaction. Preferentially modifies the beta-tubulin tail over an alpha-tail. Competes with monoglycylase TTLL3 for modification site on beta-tubulin substrate, thereby creating an anticorrelation between glycylation and glutamylation reactions. This chain is Tubulin polyglutamylase TTLL7, found in Xenopus tropicalis (Western clawed frog).